Reading from the N-terminus, the 141-residue chain is Pyrophosphate-energized proton pump (141 aa).

Helical transmembrane passes span 11 to 31 (GLIA…TLTV), 46 to 66 (GTNL…IVVI), and 121 to 141 (LAGL…AGMI).

Belongs to the H(+)-translocating pyrophosphatase (TC 3.A.10) family. In terms of assembly, homodimer. The cofactor is Mg(2+).

It is found in the cell inner membrane. The enzyme catalyses diphosphate + H2O + H(+)(in) = 2 phosphate + 2 H(+)(out). In terms of biological role, proton pump that utilizes the energy of pyrophosphate hydrolysis as the driving force for proton movement across the membrane. Generates a proton motive force. The chain is Pyrophosphate-energized proton pump (hppA) from Anaplasma marginale.